Consider the following 206-residue polypeptide: Isochorismatase family protein 1B (206 aa).

It belongs to the isochorismatase family.

This Dictyostelium discoideum (Social amoeba) protein is Isochorismatase family protein 1B.